The chain runs to 441 residues: Amino-acid acetyltransferase (441 aa).

An N-acetyltransferase domain is found at glutamate 295–serine 434.

The protein belongs to the acetyltransferase family. ArgA subfamily. In terms of assembly, homohexamer.

It is found in the cytoplasm. It carries out the reaction L-glutamate + acetyl-CoA = N-acetyl-L-glutamate + CoA + H(+). It participates in amino-acid biosynthesis; L-arginine biosynthesis; N(2)-acetyl-L-ornithine from L-glutamate: step 1/4. The polypeptide is Amino-acid acetyltransferase (Yersinia enterocolitica serotype O:8 / biotype 1B (strain NCTC 13174 / 8081)).